The following is a 98-amino-acid chain: uncharacterized protein (98 aa).

This is an uncharacterized protein from Sulfolobus islandicus filamentous virus (isolate Iceland/Hveragerdi) (SIFV).